A 393-amino-acid polypeptide reads, in one-letter code: Homeobox protein knotted-1-like 4 (393 aa).

Polar residues predominate over residues 1–13; it reads MAFHNNHFNHFTD. Disordered stretches follow at residues 1–39 and 81–114; these read MAFHNNHFNHFTDQQQHQPPPPPQQQQQQHFQESAPPNW and QRGNTANNNNNETSGDVIEDVPGGEESMIGEKKE. The 21-residue stretch at 286–306 folds into the ELK domain; the sequence is ELKHELKQGYKEKIVDIREEI. Residues 307–370 constitute a DNA-binding region (homeobox; TALE-type); sequence LRKRRAGKLP…NQRKRNWHSN (64 aa). Residues 363 to 393 are disordered; that stretch reads RKRNWHSNPSSSTVSKNKRRSNAGENSGRDR. Over residues 368–377 the composition is skewed to polar residues; it reads HSNPSSSTVS.

Belongs to the TALE/KNOX homeobox family. May form heterodimeric complex with the TALE/BELL proteins. Interacts with OFP1, OFP2, OFP4 and OFP12. Interacts with KNATM-B.

The protein localises to the nucleus. This Arabidopsis thaliana (Mouse-ear cress) protein is Homeobox protein knotted-1-like 4 (KNAT4).